The sequence spans 887 residues: Autotaxin (887 aa).

Residues 1-27 (MARQGCLGSFQVISLFTFAISVNICLG) form the signal peptide. Positions 28–35 (FTASRIKR) are cleaved as a propeptide — removed by furin. An N-linked (GlcNAc...) asparagine glycan is attached at asparagine 53. 2 SMB domains span residues 54–97 (TSGS…LKTA) and 98–142 (RGWE…GESH). 10 disulfides stabilise this stretch: cysteine 58/cysteine 75, cysteine 62/cysteine 93, cysteine 73/cysteine 86, cysteine 79/cysteine 85, cysteine 102/cysteine 119, cysteine 107/cysteine 137, cysteine 117/cysteine 130, cysteine 123/cysteine 129, cysteine 148/cysteine 194, and cysteine 156/cysteine 350. Positions 126-128 (RGD) match the Cell attachment site motif. Residues 144 to 501 (VDDDCEEIKV…PTFKYRTKVP (358 aa)) are phosphodiesterase. The Zn(2+) site is built by aspartate 171 and threonine 209. The active-site Nucleophile is threonine 209. The 1-(9Z-octadecenoyl)-sn-glycero-3-phosphate site is built by threonine 209, asparagine 230, and aspartate 311. Residues threonine 209, asparagine 230, and aspartate 311 each contribute to the 1-hexadecanoyl-sn-glycero-3-phosphate site. 1-tetradecanoyl-sn-glycerol 3-phosphate-binding residues include threonine 209, asparagine 230, and aspartate 311. Zn(2+) is bound by residues aspartate 311, histidine 315, aspartate 358, and histidine 359. Cystine bridges form between cysteine 366/cysteine 468, cysteine 413/cysteine 830, cysteine 566/cysteine 691, cysteine 568/cysteine 676, and cysteine 799/cysteine 809. Residues asparagine 398 and asparagine 410 are each glycosylated (N-linked (GlcNAc...) asparagine). Residue histidine 474 coordinates Zn(2+). Histidine 474 is a 1-(9Z-octadecenoyl)-sn-glycero-3-phosphate binding site. Histidine 474 is a binding site for 1-hexadecanoyl-sn-glycero-3-phosphate. Histidine 474 is a binding site for 1-tetradecanoyl-sn-glycerol 3-phosphate. N-linked (GlcNAc...) asparagine glycosylation is present at asparagine 524. Positions 586 to 607 (HTKGSTEAETGKFRGSKHENKK) are enriched in basic and acidic residues. The tract at residues 586 to 615 (HTKGSTEAETGKFRGSKHENKKNLNGSVEP) is disordered. Asparagine 610 carries N-linked (GlcNAc...) asparagine glycosylation. The nuclease-like domain stretch occupies residues 622 to 887 (LYGRPAVLYR…TYLHTYESEI (266 aa)). Residues aspartate 764, asparagine 766, aspartate 768, leucine 770, and aspartate 772 each contribute to the Ca(2+) site. The N-linked (GlcNAc...) asparagine glycan is linked to asparagine 831. The tract at residues 854–875 (IEHLTGLDFYRKTSRSYSEILT) is required for secretion.

Belongs to the nucleotide pyrophosphatase/phosphodiesterase family. Zn(2+) serves as cofactor. Requires Ca(2+) as cofactor. Post-translationally, N-glycosylation, but not furin-cleavage, plays a critical role on secretion and on lysoPLD activity. The interdomain disulfide bond between Cys-413 and Cys-830 is essential for catalytic activity. As to expression, abundantly expressed in cerebrum and cerebellum. Localized in secretory epithelial cells in the brain and the eye including choroid plexus epithelial cells, ciliary epithelial cells, iris pigment epithelial cells, and retinal pigment cells.

It is found in the secreted. The catalysed reaction is a 1-O-alkyl-sn-glycero-3-phosphoethanolamine + H2O = a 1-O-alkyl-sn-glycero-3-phosphate + ethanolamine + H(+). The enzyme catalyses a 1-acyl-sn-glycero-3-phosphoethanolamine + H2O = a 1-acyl-sn-glycero-3-phosphate + ethanolamine + H(+). It catalyses the reaction 1-(9Z-octadecenoyl)-sn-glycero-3-phosphoethanolamine + H2O = 1-(9Z-octadecenoyl)-sn-glycero-3-phosphate + ethanolamine + H(+). It carries out the reaction a 1-O-alkyl-sn-glycero-3-phosphocholine + H2O = a 1-O-alkyl-sn-glycero-3-phosphate + choline + H(+). The catalysed reaction is 1-O-(9Z-octadecenyl)-sn-glycero-3-phosphocholine + H2O = 1-O-(9Z-octadecenyl)-sn-glycero-3-phosphate + choline + H(+). The enzyme catalyses 1-O-hexadecyl-sn-glycero-3-phosphocholine + H2O = 1-O-hexadecyl-sn-glycero-3-phosphate + choline + H(+). It catalyses the reaction a 1-O-(1Z-alkenyl)-sn-glycero-3-phosphocholine + H2O = a 1-O-(1Z-alkenyl)-sn-glycero-3-phosphate + choline + H(+). It carries out the reaction a 1-acyl-sn-glycero-3-phosphocholine + H2O = a 1-acyl-sn-glycero-3-phosphate + choline + H(+). The catalysed reaction is 1-dodecanoyl-sn-glycero-3-phosphocholine + H2O = 1-dodecanoyl-sn-glycerol 3-phosphate + choline + H(+). The enzyme catalyses 1-(9Z-octadecenoyl)-sn-glycero-3-phosphocholine + H2O = 1-(9Z-octadecenoyl)-sn-glycero-3-phosphate + choline + H(+). It catalyses the reaction 1-tetradecanoyl-sn-glycero-3-phosphocholine + H2O = 1-tetradecanoyl-sn-glycerol 3-phosphate + choline + H(+). It carries out the reaction 1-decanoyl-sn-glycero-3-phosphocholine + H2O = 1-decanoyl-sn-glycero-3-phosphate + choline + H(+). The catalysed reaction is 1-octadecanoyl-sn-glycero-3-phosphocholine + H2O = 1-octadecanoyl-sn-glycero-3-phosphate + choline + H(+). The enzyme catalyses 1-hexadecanoyl-sn-glycero-3-phosphocholine + H2O = 1-hexadecanoyl-sn-glycero-3-phosphate + choline + H(+). It catalyses the reaction 1-hexanoyl-sn-glycero-3-phosphocholine + H2O = 1-hexanoyl-sn-glycero-3-phosphate + choline + H(+). It carries out the reaction 1-(9Z,12Z)-octadecadienoyl-sn-glycero-3-phosphocholine + H2O = 1-(9Z,12Z)-octadecadienoyl-sn-glycero-3-phosphate + choline + H(+). The catalysed reaction is sphing-4-enine-phosphocholine + H2O = sphing-4-enine 1-phosphate + choline + H(+). The enzyme catalyses 1-(5Z,8Z,11Z,14Z-eicosatetraenoyl)-sn-glycero-3-phosphocholine + H2O = 1-(5Z,8Z,11Z,14Z-eicosatetraenoyl)-sn-glycero-3-phosphate + choline + H(+). It catalyses the reaction a 2-acyl-sn-glycero-3-phosphocholine + H2O = a 2-acyl-sn-glycerol 3-phosphate + choline + H(+). It carries out the reaction a 1,2-diacyl-sn-glycero-3-phosphocholine + H2O = a 1,2-diacyl-sn-glycero-3-phosphate + choline + H(+). The catalysed reaction is 1,2-dioctanoyl-sn-glycero-3-phosphocholine + H2O = 1,2-dioctanoyl-sn-glycero-3-phosphate + choline + H(+). The enzyme catalyses 1,2-didecanoyl-sn-glycero-3-phosphocholine + H2O = 1,2-didecanoyl-sn-glycero-3-phosphate + choline + H(+). It catalyses the reaction a 1-acyl-sn-glycero-3-phospho-L-serine + H2O = a 1-acyl-sn-glycero-3-phosphate + L-serine + H(+). It carries out the reaction 1-(9Z-octadecenoyl)-sn-glycero-3-phospho-L-serine + H2O = 1-(9Z-octadecenoyl)-sn-glycero-3-phosphate + L-serine + H(+). The catalysed reaction is a 2-acyl-sn-glycero-3-phospho-L-serine + H2O = a 2-acyl-sn-glycerol 3-phosphate + L-serine + H(+). Inhibited by vanadate. Inhibited by micromolar levels of bile salts, such as tauroursodeoxycholate. Not inhibited by taurodeoxycholate. Not inhibited by hydroxysterols, such as 7-hydroxycholesterol, testosterone, dexamethasone and prednisolone. Inhibited by EDTA and EGTA. Its function is as follows. Secreted lysophospholipase D that hydrolyzes lysophospholipids to produce the signaling molecule lysophosphatidic acid (LPA) in extracellular fluids. Its major substrate is lysophosphatidylcholine. Can also act on sphingosylphosphorylcholine producing sphingosine-1-phosphate, a modulator of cell motility. Can hydrolyze, in vitro, bis-pNPP, to some extent pNP-TMP, and barely ATP. Involved in several motility-related processes such as angiogenesis and neurite outgrowth. Acts as an angiogenic factor by stimulating migration of smooth muscle cells and microtubule formation. Stimulates migration of melanoma cells, probably via a pertussis toxin-sensitive G protein. May have a role in induction of parturition. Possible involvement in cell proliferation and adipose tissue development. Required for LPA production in activated platelets, cleaves the sn-1 lysophospholipids to generate sn-1 lysophosphatidic acids containing predominantly 18:2 and 20:4 fatty acids. Shows a preference for the sn-1 to the sn-2 isomer of 1-O-alkyl-sn-glycero-3-phosphocholine (lyso-PAF). This chain is Autotaxin, found in Rattus norvegicus (Rat).